The following is a 476-amino-acid chain: Sulfate adenylyltransferase subunit 1 (476 aa).

A tr-type G domain is found at lysine 24–lysine 239. The G1 stretch occupies residues glycine 33–serine 40. Position 33–40 (glycine 33–serine 40) interacts with GTP. A G2 region spans residues glycine 91 to aspartate 95. The segment at aspartate 112 to glycine 115 is G3. GTP-binding positions include aspartate 112 to histidine 116 and asparagine 167 to aspartate 170. A G4 region spans residues asparagine 167–aspartate 170. Positions serine 205 to leucine 207 are G5.

The protein belongs to the TRAFAC class translation factor GTPase superfamily. Classic translation factor GTPase family. CysN/NodQ subfamily. In terms of assembly, heterodimer composed of CysD, the smaller subunit, and CysN.

The catalysed reaction is sulfate + ATP + H(+) = adenosine 5'-phosphosulfate + diphosphate. It participates in sulfur metabolism; hydrogen sulfide biosynthesis; sulfite from sulfate: step 1/3. In terms of biological role, with CysD forms the ATP sulfurylase (ATPS) that catalyzes the adenylation of sulfate producing adenosine 5'-phosphosulfate (APS) and diphosphate, the first enzymatic step in sulfur assimilation pathway. APS synthesis involves the formation of a high-energy phosphoric-sulfuric acid anhydride bond driven by GTP hydrolysis by CysN coupled to ATP hydrolysis by CysD. The polypeptide is Sulfate adenylyltransferase subunit 1 (Vibrio atlanticus (strain LGP32) (Vibrio splendidus (strain Mel32))).